The sequence spans 211 residues: MKAVLFAVAALLAVCIPISAKQCNVNPVNIPKGWITMQQSCRGSMRRQIQTEVGASLQYLAMGAHFSRDGINRPGFAKLFFDAASEEREHAMKLIDYLLMRGELETDVTSLIQIRAPERKSWESGVDALEHALKMETEVTKSIRSVIIACESDPKFNDYHLVDYLTGEFLEEQYKGQRDLAGKASTLKKMLDRHSSLGEFLFDKKLLGMDI.

The first 20 residues, 1 to 20 (MKAVLFAVAALLAVCIPISA), serve as a signal peptide directing secretion. Positions 35–191 (ITMQQSCRGS…GKASTLKKML (157 aa)) constitute a Ferritin-like diiron domain. Cys41 and Cys150 are joined by a disulfide. Fe cation contacts are provided by Glu52, Glu87, His90, Glu136, and Gln173.

The protein belongs to the ferritin family. As to quaternary structure, oligomer of 12 light (L) chains and 12 heavy (H) chains; L and H chains are disulfide-linked. The functional molecule forms a roughly spherical shell with a diameter of 12 nm and contains a central cavity into which the insoluble ferric iron core is deposited.

It is found in the golgi apparatus. It localises to the secreted. The enzyme catalyses 4 Fe(2+) + O2 + 4 H(+) = 4 Fe(3+) + 2 H2O. Stores iron in a soluble, non-toxic, readily available form. Important for iron homeostasis. Iron is taken up in the ferrous form and deposited as ferric hydroxides after oxidation. Ferritin is composed of a heavy (H) chain which is responsible for the oxidation and uptake of ferrous iron, and a light (L) chain which facilitates the nucleation of the ferrihydrite iron core. This chain is Ferritin heavy chain, found in Papilio xuthus (Asian swallowtail butterfly).